Here is a 345-residue protein sequence, read N- to C-terminus: Phosphoribosylformylglycinamidine cyclo-ligase (345 aa).

This sequence belongs to the AIR synthase family.

The protein localises to the cytoplasm. It catalyses the reaction 2-formamido-N(1)-(5-O-phospho-beta-D-ribosyl)acetamidine + ATP = 5-amino-1-(5-phospho-beta-D-ribosyl)imidazole + ADP + phosphate + H(+). The protein operates within purine metabolism; IMP biosynthesis via de novo pathway; 5-amino-1-(5-phospho-D-ribosyl)imidazole from N(2)-formyl-N(1)-(5-phospho-D-ribosyl)glycinamide: step 2/2. The polypeptide is Phosphoribosylformylglycinamidine cyclo-ligase (Prochlorococcus marinus (strain MIT 9313)).